Reading from the N-terminus, the 278-residue chain is Putative non-heme haloperoxidase (278 aa).

The 217-residue stretch at 24-240 (PLVFLHGLSV…STAKITNASF (217 aa)) folds into the AB hydrolase-1 domain. Residues serine 97 and aspartate 221 contribute to the active site.

Belongs to the AB hydrolase superfamily.

This Mycobacterium (Mycobacteriophage D29) protein is Putative non-heme haloperoxidase (59.2).